Consider the following 342-residue polypeptide: Ribosomal RNA small subunit methyltransferase C (342 aa).

It belongs to the methyltransferase superfamily. RsmC family. As to quaternary structure, monomer.

The protein localises to the cytoplasm. The enzyme catalyses guanosine(1207) in 16S rRNA + S-adenosyl-L-methionine = N(2)-methylguanosine(1207) in 16S rRNA + S-adenosyl-L-homocysteine + H(+). Its function is as follows. Specifically methylates the guanine in position 1207 of 16S rRNA in the 30S particle. This chain is Ribosomal RNA small subunit methyltransferase C, found in Shewanella sp. (strain MR-4).